Reading from the N-terminus, the 343-residue chain is Ribosomal RNA small subunit methyltransferase C (343 aa).

Belongs to the methyltransferase superfamily. RsmC family. In terms of assembly, monomer.

The protein localises to the cytoplasm. The enzyme catalyses guanosine(1207) in 16S rRNA + S-adenosyl-L-methionine = N(2)-methylguanosine(1207) in 16S rRNA + S-adenosyl-L-homocysteine + H(+). Functionally, specifically methylates the guanine in position 1207 of 16S rRNA in the 30S particle. This is Ribosomal RNA small subunit methyltransferase C from Shewanella sediminis (strain HAW-EB3).